The sequence spans 307 residues: N-acetylmuramic acid 6-phosphate etherase (307 aa).

In terms of domain architecture, SIS spans 59-222 (TADRLRQGGR…STGVMVKLGK (164 aa)). E87 acts as the Proton donor in catalysis. Residue E118 is part of the active site.

This sequence belongs to the GCKR-like family. MurNAc-6-P etherase subfamily. In terms of assembly, homodimer.

It carries out the reaction N-acetyl-D-muramate 6-phosphate + H2O = N-acetyl-D-glucosamine 6-phosphate + (R)-lactate. It participates in amino-sugar metabolism; N-acetylmuramate degradation. Its function is as follows. Specifically catalyzes the cleavage of the D-lactyl ether substituent of MurNAc 6-phosphate, producing GlcNAc 6-phosphate and D-lactate. This Nostoc sp. (strain PCC 7120 / SAG 25.82 / UTEX 2576) protein is N-acetylmuramic acid 6-phosphate etherase.